The chain runs to 77 residues: Phytosulfokines 5 (77 aa).

A signal peptide spans methionine 1–alanine 24. Residues arginine 25–aspartate 68 constitute a propeptide that is removed on maturation. Sulfotyrosine is present on residues tyrosine 69 and tyrosine 71. The propeptide occupies asparagine 74 to proline 77.

Belongs to the phytosulfokine family. Post-translationally, sulfation is important for activity and for the binding to a putative membrane receptor. In terms of processing, PSK-beta is an enzymatic derivative of PSK-alpha. As to expression, expressed in stems, roots, mature leaves and flowers. Most abundant in vascular bundles.

It localises to the secreted. Its function is as follows. Promotes plant cell differentiation, organogenesis and somatic embryogenesis as well as cell proliferation. May be involved in the low quiescent center cell proliferation. This chain is Phytosulfokines 5 (PSK5), found in Arabidopsis thaliana (Mouse-ear cress).